We begin with the raw amino-acid sequence, 100 residues long: Large ribosomal subunit protein uL23 (100 aa).

The protein belongs to the universal ribosomal protein uL23 family. Part of the 50S ribosomal subunit. Contacts protein L29, and trigger factor when it is bound to the ribosome.

Its function is as follows. One of the early assembly proteins it binds 23S rRNA. One of the proteins that surrounds the polypeptide exit tunnel on the outside of the ribosome. Forms the main docking site for trigger factor binding to the ribosome. This Aggregatibacter actinomycetemcomitans (Actinobacillus actinomycetemcomitans) protein is Large ribosomal subunit protein uL23.